Consider the following 120-residue polypeptide: Glycine cleavage system H protein (120 aa).

The Lipoyl-binding domain maps to 17–99; the sequence is VATVGITAHA…QGAGWLYRLK (83 aa). Position 58 is an N6-lipoyllysine (Lys-58).

This sequence belongs to the GcvH family. The glycine cleavage system is composed of four proteins: P, T, L and H. Requires (R)-lipoate as cofactor.

In terms of biological role, the glycine cleavage system catalyzes the degradation of glycine. The H protein shuttles the methylamine group of glycine from the P protein to the T protein. This is Glycine cleavage system H protein from Methylorubrum populi (strain ATCC BAA-705 / NCIMB 13946 / BJ001) (Methylobacterium populi).